A 126-amino-acid chain; its full sequence is Large ribosomal subunit protein bL12 (126 aa).

This sequence belongs to the bacterial ribosomal protein bL12 family. In terms of assembly, homodimer. Part of the ribosomal stalk of the 50S ribosomal subunit. Forms a multimeric L10(L12)X complex, where L10 forms an elongated spine to which 2 to 4 L12 dimers bind in a sequential fashion. Binds GTP-bound translation factors.

Functionally, forms part of the ribosomal stalk which helps the ribosome interact with GTP-bound translation factors. Is thus essential for accurate translation. The sequence is that of Large ribosomal subunit protein bL12 from Chlorobaculum parvum (strain DSM 263 / NCIMB 8327) (Chlorobium vibrioforme subsp. thiosulfatophilum).